A 218-amino-acid polypeptide reads, in one-letter code: GTP cyclohydrolase 1 (218 aa).

Cys109, His112, and Cys180 together coordinate Zn(2+).

Belongs to the GTP cyclohydrolase I family. Toroid-shaped homodecamer, composed of two pentamers of five dimers.

The catalysed reaction is GTP + H2O = 7,8-dihydroneopterin 3'-triphosphate + formate + H(+). The protein operates within cofactor biosynthesis; 7,8-dihydroneopterin triphosphate biosynthesis; 7,8-dihydroneopterin triphosphate from GTP: step 1/1. The chain is GTP cyclohydrolase 1 (folE) from Pasteurella multocida (strain Pm70).